We begin with the raw amino-acid sequence, 208 residues long: Imidazoleglycerol-phosphate dehydratase (208 aa).

Belongs to the imidazoleglycerol-phosphate dehydratase family.

The protein localises to the cytoplasm. The enzyme catalyses D-erythro-1-(imidazol-4-yl)glycerol 3-phosphate = 3-(imidazol-4-yl)-2-oxopropyl phosphate + H2O. The protein operates within amino-acid biosynthesis; L-histidine biosynthesis; L-histidine from 5-phospho-alpha-D-ribose 1-diphosphate: step 6/9. The polypeptide is Imidazoleglycerol-phosphate dehydratase (Symbiobacterium thermophilum (strain DSM 24528 / JCM 14929 / IAM 14863 / T)).